The primary structure comprises 584 residues: DNA ligase (584 aa).

Residue Glu-249 coordinates ATP. The active-site N6-AMP-lysine intermediate is the Lys-251. ATP contacts are provided by Arg-256, Arg-271, Glu-301, Phe-341, Arg-416, and Lys-422.

This sequence belongs to the ATP-dependent DNA ligase family. Mg(2+) is required as a cofactor.

It catalyses the reaction ATP + (deoxyribonucleotide)n-3'-hydroxyl + 5'-phospho-(deoxyribonucleotide)m = (deoxyribonucleotide)n+m + AMP + diphosphate.. Its function is as follows. DNA ligase that seals nicks in double-stranded DNA during DNA replication, DNA recombination and DNA repair. This chain is DNA ligase, found in Pyrobaculum islandicum (strain DSM 4184 / JCM 9189 / GEO3).